A 189-amino-acid polypeptide reads, in one-letter code: Ras-like protein 1 (189 aa).

10-17 (GAGGVGKS) is a GTP binding site. The Effector region signature appears at 32–40 (YDPTIEDSY). GTP contacts are provided by residues 57–61 (DTAGQ) and 116–119 (NKCD). Residue cysteine 186 is modified to Cysteine methyl ester. Cysteine 186 is lipidated: S-geranylgeranyl cysteine. Positions 187–189 (KML) are cleaved as a propeptide — removed in mature form.

The protein belongs to the small GTPase superfamily. Ras family.

It is found in the cell membrane. The catalysed reaction is GTP + H2O = GDP + phosphate + H(+). Its activity is regulated as follows. Alternates between an inactive form bound to GDP and an active form bound to GTP. Activated by a guanine nucleotide-exchange factor (GEF) and inactivated by a GTPase-activating protein (GAP). Functionally, ras proteins bind GDP/GTP and possess intrinsic GTPase activity. Plays a role in eye development by regulating cell growth, survival of postmitotic ommatidial cells and differentiation of photoreceptor cells. During larval development, mediates Ptth/tor signaling leading to the production of ecdysone, a hormone required for the initiation of metamorphosis. This is Ras-like protein 1 from Drosophila ananassae (Fruit fly).